Reading from the N-terminus, the 29-residue chain is Cyclotide mech-3 (29 aa).

The cyclopeptide (Gly-Asn) cross-link spans 1-29; that stretch reads GLPTCGETCTLGKCNTPKCTCNWPICYKN. 3 cysteine pairs are disulfide-bonded: Cys-5–Cys-19, Cys-9–Cys-21, and Cys-14–Cys-26.

This is a cyclic peptide. Post-translationally, contains 3 disulfide bonds.

Probably participates in a plant defense mechanism (Potential). Binds to and induces leakage in phospholipd membranes, particularly ones containing 1-palmitoyl-2-oleophosphatidylethanolamine (POPE). In vitro, displays cytotoxicity against cultured cells but no hemolytic activity towards fresh erythrocytes. The protein is Cyclotide mech-3 of Melicytus chathamicus (Chatham Island mahoe).